The primary structure comprises 484 residues: Protein nucleotidyltransferase YdiU (484 aa).

Residues G87, G89, R90, K110, D122, G123, R173, and R180 each contribute to the ATP site. D249 (proton acceptor) is an active-site residue. Residues N250 and D259 each coordinate Mg(2+). An ATP-binding site is contributed by D259. The tract at residues 463 to 484 (EQEKYAELPPPSDRPYRTFCGT) is disordered.

It belongs to the SELO family. Requires Mg(2+) as cofactor. Mn(2+) is required as a cofactor.

It carries out the reaction L-seryl-[protein] + ATP = 3-O-(5'-adenylyl)-L-seryl-[protein] + diphosphate. The enzyme catalyses L-threonyl-[protein] + ATP = 3-O-(5'-adenylyl)-L-threonyl-[protein] + diphosphate. It catalyses the reaction L-tyrosyl-[protein] + ATP = O-(5'-adenylyl)-L-tyrosyl-[protein] + diphosphate. The catalysed reaction is L-histidyl-[protein] + UTP = N(tele)-(5'-uridylyl)-L-histidyl-[protein] + diphosphate. It carries out the reaction L-seryl-[protein] + UTP = O-(5'-uridylyl)-L-seryl-[protein] + diphosphate. The enzyme catalyses L-tyrosyl-[protein] + UTP = O-(5'-uridylyl)-L-tyrosyl-[protein] + diphosphate. Functionally, nucleotidyltransferase involved in the post-translational modification of proteins. It can catalyze the addition of adenosine monophosphate (AMP) or uridine monophosphate (UMP) to a protein, resulting in modifications known as AMPylation and UMPylation. The chain is Protein nucleotidyltransferase YdiU from Geobacillus kaustophilus (strain HTA426).